Consider the following 95-residue polypeptide: Large ribosomal subunit protein uL23 (95 aa).

It belongs to the universal ribosomal protein uL23 family. In terms of assembly, part of the 50S ribosomal subunit. Contacts protein L29, and trigger factor when it is bound to the ribosome.

Functionally, one of the early assembly proteins it binds 23S rRNA. One of the proteins that surrounds the polypeptide exit tunnel on the outside of the ribosome. Forms the main docking site for trigger factor binding to the ribosome. The chain is Large ribosomal subunit protein uL23 from Pediococcus pentosaceus (strain ATCC 25745 / CCUG 21536 / LMG 10740 / 183-1w).